Consider the following 309-residue polypeptide: MDKKQRKVVIVGDGSVGSSFAFSLVQNCALDELVIVDLVKTHAEGDVKDLEDVAAFTNATNIHTGEYADARDADIVVITAGVPRKPGESRLDLINRNTKILESIVKPVVASGFNGCFVISSNPVDILTSMTQRLSGFPRHRVIGTGTSLDTARLRVALAQKLNVATTAVDAAVLGEHGDSSIVNFDEIMINAQPLKTVTTVDDQFKAEIEQAVRGKGGQIISQKGATFYGVAVSLMQICRAILNDENAELIVSAALSGQYGINDLYLGSPAIINRNGLQKVIEAELSDDERARMQHFAAKMLTMMNVAS.

NAD(+)-binding positions include Val-16, Asp-37, Tyr-67, and 81 to 82 (GV). Residue Arg-90 participates in substrate binding. NAD(+) is bound at residue Ser-103. 122–125 (NPVD) contacts substrate. Residue Thr-145 participates in NAD(+) binding. 150 to 153 (DTAR) is a binding site for substrate. Catalysis depends on His-177, which acts as the Proton acceptor. Thr-227 serves as a coordination point for substrate.

This sequence belongs to the LDH/MDH superfamily. LDH family. As to quaternary structure, homotetramer.

It localises to the cytoplasm. It catalyses the reaction (S)-lactate + NAD(+) = pyruvate + NADH + H(+). It participates in fermentation; pyruvate fermentation to lactate; (S)-lactate from pyruvate: step 1/1. In terms of biological role, catalyzes the conversion of lactate to pyruvate. The protein is L-lactate dehydrogenase 2 of Lactiplantibacillus plantarum (strain ATCC BAA-793 / NCIMB 8826 / WCFS1) (Lactobacillus plantarum).